The sequence spans 220 residues: Transmembrane emp24 domain-containing protein 1 (220 aa).

Positions 1 to 19 are cleaved as a signal peptide; it reads MAWSSSFLFIVLPLAAAVA. At 20 to 187 the chain is on the extracellular side; the sequence is VQPQDTELTF…LQDSNLERVN (168 aa). The GOLD domain occupies 36–118; that stretch reads QECFYQTTLY…EKLVFFELIF (83 aa). Residues 138 to 164 adopt a coiled-coil conformation; sequence ELLDIKLEDIKESIESVKSRLERSIQM. Residues 188 to 208 traverse the membrane as a helical segment; the sequence is FWSAINVGVLVTVAFLQVYML. Topologically, residues 209 to 220 are cytoplasmic; the sequence is KSLFDDKRKIRT. The COPII vesicle coat-binding motif lies at 211–212; that stretch reads LF. Positions 211 to 220 match the COPI vesicle coat-binding motif; that stretch reads LFDDKRKIRT.

This sequence belongs to the EMP24/GP25L family. As to quaternary structure, homodimer in endoplasmic reticulum, endoplasmic reticulum-Golgi intermediate compartment and cis-Golgi network. Interacts with IL1RL1. Interacts with RNF26; this interaction is important to modulate innate immune signaling through the cGAS-STING pathway.

The protein localises to the cell membrane. Its subcellular location is the endoplasmic reticulum membrane. The protein resides in the golgi apparatus. It localises to the cis-Golgi network membrane. It is found in the endoplasmic reticulum-Golgi intermediate compartment membrane. Potential role in vesicular protein trafficking, mainly in the early secretory pathway. May act as a cargo receptor at the lumenal side for incorporation of secretory cargo molecules into transport vesicles and may be involved in vesicle coat formation at the cytoplasmic side. Plays a positive role in IL-33-mediated IL-8 and IL-6 production by interacting with interleukin-33 receptor IL1RL1. Plays also a role in the modulation of innate immune signaling through the cGAS-STING pathway by interacting with RNF26. The polypeptide is Transmembrane emp24 domain-containing protein 1 (tmed1) (Xenopus tropicalis (Western clawed frog)).